The primary structure comprises 312 residues: Olfactory receptor 7D2 (312 aa).

The Extracellular portion of the chain corresponds to 1–25 (MEAGNQTGFLEFILLGLSEDPELQP). N-linked (GlcNAc...) asparagine glycosylation is present at Asn-5. The helical transmembrane segment at 26–46 (FIFGLFLSMYLVTVLGNLLII) threads the bilayer. Over 47 to 54 (LAISSDSH) the chain is Cytoplasmic. The helical transmembrane segment at 55-75 (LHTPMYFFLSNLSWVDICFST) threads the bilayer. Residues 76–99 (CIVPKMLVNIQTENKAISYMDCLT) lie on the Extracellular side of the membrane. Cysteines 97 and 189 form a disulfide. A helical transmembrane segment spans residues 100–120 (QVYFSMFFPILDTLLLTVMAY). Residues 121–139 (DRFVAVCHPLHYMIIMNPH) are Cytoplasmic-facing. Residues 140–160 (LCGLLVFVTWLIGVMTSLLHI) form a helical membrane-spanning segment. The Extracellular portion of the chain corresponds to 161–197 (SLMMHLIFCKDFEIPHFFCELTYILQLACSDTFLNST). The chain crosses the membrane as a helical span at residues 198–217 (LIYFMTGVLGVFPLLGIIFS). The Cytoplasmic portion of the chain corresponds to 218 to 237 (YSRIASSIRKMSSSGGKQKA). A helical transmembrane segment spans residues 238 to 258 (LSTCGSHLSVVSLFYGTGIGV). Over 259-271 (HFTSAVTHSSQKI) the chain is Extracellular. A helical membrane pass occupies residues 272–292 (SVASVMYTVVTPMLNPFIYSL). The Cytoplasmic segment spans residues 293–312 (RNKDVKGALGSLLSRAASCL).

Belongs to the G-protein coupled receptor 1 family.

The protein localises to the cell membrane. In terms of biological role, odorant receptor. This is Olfactory receptor 7D2 (OR7D2) from Homo sapiens (Human).